The sequence spans 287 residues: Bifunctional protein FolD (287 aa).

NADP(+) is bound by residues 165–167 (NRS), Ser-190, and Ile-233.

The protein belongs to the tetrahydrofolate dehydrogenase/cyclohydrolase family. As to quaternary structure, homodimer.

It carries out the reaction (6R)-5,10-methylene-5,6,7,8-tetrahydrofolate + NADP(+) = (6R)-5,10-methenyltetrahydrofolate + NADPH. The enzyme catalyses (6R)-5,10-methenyltetrahydrofolate + H2O = (6R)-10-formyltetrahydrofolate + H(+). It functions in the pathway one-carbon metabolism; tetrahydrofolate interconversion. Its function is as follows. Catalyzes the oxidation of 5,10-methylenetetrahydrofolate to 5,10-methenyltetrahydrofolate and then the hydrolysis of 5,10-methenyltetrahydrofolate to 10-formyltetrahydrofolate. The sequence is that of Bifunctional protein FolD from Nitrosopumilus maritimus (strain SCM1).